The primary structure comprises 323 residues: Olfactory receptor 5P58 (323 aa).

Residues 1-28 (MAFLEDGNHTAVTEFILVGLTDDPVLKV) lie on the Extracellular side of the membrane. N-linked (GlcNAc...) asparagine glycosylation is present at Asn8. Residues 29 to 49 (ILFTIILCIYLVTVSGNLSTI) traverse the membrane as a helical segment. The Cytoplasmic segment spans residues 50–57 (LLIRVSSQ). A helical transmembrane segment spans residues 58–78 (LHHPMYFFLSHLASVDLGYSS). At 79 to 102 (SVTPNMLINFLAENNTISYIGCSI) the chain is on the extracellular side. N-linked (GlcNAc...) asparagine glycosylation is present at Asn92. A disulfide bond links Cys100 and Cys192. The helical transmembrane segment at 103-123 (QFGSATFFGVLECFLLAVMAY) threads the bilayer. The Cytoplasmic segment spans residues 124–136 (DRFVAICNPLLYS). Residues 137 to 157 (IKMSTQVCVKLVVGSYIGSSL) form a helical membrane-spanning segment. The Extracellular portion of the chain corresponds to 158-199 (NASFVTVSIFNLLFCGPNKINHFFCDFDPLIELSCSDVSVPV). The chain crosses the membrane as a helical span at residues 200–220 (AVTSCSAGLITMITVFVIAVS). Topologically, residues 221 to 240 (YTYILITVLKMRSTEGRHKA) are cytoplasmic. The chain crosses the membrane as a helical span at residues 241-261 (FSTCTSHLTAVTLFYGTVTFI). Topologically, residues 262–274 (YVMPKSNYSTDQN) are extracellular. Asn268 carries an N-linked (GlcNAc...) asparagine glycan. The helical transmembrane segment at 275–295 (KVVSVFYMVVIPMLNPLIYSL) threads the bilayer. The Cytoplasmic portion of the chain corresponds to 296-323 (RNNEIKGALKRQLGKKIFSQSNILFCKS).

It belongs to the G-protein coupled receptor 1 family.

The protein localises to the cell membrane. Functionally, potential odorant receptor. The sequence is that of Olfactory receptor 5P58 from Mus musculus (Mouse).